The chain runs to 1208 residues: ATP-dependent DNA helicase Q4 (1208 aa).

2 disordered regions span residues 17–180 and 201–333; these read AFRR…ASLS and FLGA…AGKA. Ser27 carries the phosphoserine modification. Residues 36–47 show a composition bias toward basic and acidic residues; that stretch reads EETRALYREYRT. A compositionally biased stretch (low complexity) spans 61–70; sequence SSESLPAAAE. The segment covering 86–100 has biased composition (polar residues); it reads ATKSPQSTPGRSRQG. Residues Ser178 and Ser180 each carry the phosphoserine modification. Polar residues predominate over residues 273-283; that stretch reads AQVQQESSQAG. One can recognise a Helicase ATP-binding domain in the interval 489–662; it reads VMRILSGIST…AQHLAVAEEP (174 aa). 502-509 provides a ligand contact to ATP; sequence LPTGAGKS. Residues 605–608 carry the DEAH box motif; that stretch reads DEAH. The 168-residue stretch at 683–850 folds into the Helicase C-terminal domain; it reads DTDQALLTLL…AVKRLVQRVF (168 aa). 2 residues coordinate Zn(2+): Cys853 and Cys855. A disordered region spans residues 860–888; it reads PPSEQEGAVGGERPVPKYPPQEAEQLSHQ. Positions 897 and 900 each coordinate Zn(2+). The disordered stretch occupies residues 1111-1130; the sequence is EEGQEPGGMEDAQGPEPGQA. The interval 1117-1208 is increases helicase activity about 5-fold (in a fragment starting at residue 427); that stretch reads GGMEDAQGPE…ATEELLQVAR (92 aa).

Belongs to the helicase family. RecQ subfamily. As to quaternary structure, interacts with UBR1 and UBR2. Interacts with MCM10; this interaction regulates RECQL4 unwinding activity. Interacts (via residues 1-54) with TOPBP1. Zn(2+) is required as a cofactor. As to expression, ubiquitously expressed, with highest levels in thymus and testis.

It is found in the cytoplasm. The protein localises to the nucleus. It carries out the reaction Couples ATP hydrolysis with the unwinding of duplex DNA by translocating in the 3'-5' direction.. The catalysed reaction is ATP + H2O = ADP + phosphate + H(+). In terms of biological role, an ATP-dependent DNA helicase which unwinds dsDNA with a 3'-overhang in a 3'-5' direction. Does not unwind more than 18 bp of dsDNA. May modulate chromosome segregation. The N-terminal domain (residues 1-54) binds DNA Y-shaped DNA better than ss- or dsDNA. The core helicase domain binds ssDNA. The protein is ATP-dependent DNA helicase Q4 (RECQL4) of Homo sapiens (Human).